A 395-amino-acid polypeptide reads, in one-letter code: Succinyl-diaminopimelate desuccinylase 2 (395 aa).

A Zn(2+)-binding site is contributed by H79. D81 is a catalytic residue. Residue D112 coordinates Zn(2+). The Proton acceptor role is filled by E145. Residues E146, E174, and H363 each contribute to the Zn(2+) site.

It belongs to the peptidase M20A family. DapE subfamily. Homodimer. Zn(2+) serves as cofactor. It depends on Co(2+) as a cofactor.

It catalyses the reaction N-succinyl-(2S,6S)-2,6-diaminopimelate + H2O = (2S,6S)-2,6-diaminopimelate + succinate. It participates in amino-acid biosynthesis; L-lysine biosynthesis via DAP pathway; LL-2,6-diaminopimelate from (S)-tetrahydrodipicolinate (succinylase route): step 3/3. Catalyzes the hydrolysis of N-succinyl-L,L-diaminopimelic acid (SDAP), forming succinate and LL-2,6-diaminopimelate (DAP), an intermediate involved in the bacterial biosynthesis of lysine and meso-diaminopimelic acid, an essential component of bacterial cell walls. This Ruegeria sp. (strain TM1040) (Silicibacter sp.) protein is Succinyl-diaminopimelate desuccinylase 2.